Here is a 790-residue protein sequence, read N- to C-terminus: MEVPMPESTINEDSKIFKLPEILPIMPIFHTVAFPKMMFPMDIVGNRFIQLVDEAMAKDRLLGLVLTRKAPSAEGPLCQCEDLHRVGTCVSILKLAKQAGEKAQLVVQGLARFRIVEFLEEEPYIQARVEKIEADILIKDLEIEALMANLSTLFDRVIKLSPFLPQEFAAMAKSIQEPGDLADIIASIVNASVEDKQKILETLDIRQRLREITLIVNHQLEILELGSKIQSQVQEDIDKSQRDFYLRQQLKAIREELGESDENRVEVAEYRKKIEEKMLTEEARKEAFRELDRMSRMHPASAEYSVATTYLDWITSLPWNERTQDNQDIRQARRILDEDHYGLDKAKKRIIEYLAVRKLKPDTKGPILCFVGPPGTGKTSLAQSIARALGRKFYRISLGGVHDEAEIRGHRRTYVGALPGRIIQGIRRAESSNPVFVLDEIDKVGSDFRGDPSSALLEVLDPEQNFAFMDHYLGVAFDLSHVTFITTANILDTIPPALRDRLEVIELPGYTQDEKLRIAERYLIPRQREANGLTPEQIKFTRGAARLIISGYTREAGVRNLEREIAAVCRGVASQIAEGEISSALISARDIHRYLGPVRMISDARERISKPGIAMGLAWTPTGGDLLFVEATAMKGRKGLTLTGQLGEVMKESASAALSFIRSNAVKIGIPVDFFEETDIHIHVPAGAIPKDGPSAGVTMLAALASLLTNRTVKNDLAMTGEITLRGLVLPVGGIKEKVLAAHRAGIKTIILPKWNRKDLEEIPSKVRKEMNFVFVNDMREVLNIALSRK.

A Lon N-terminal domain is found at 23 to 220 (LPIMPIFHTV…EITLIVNHQL (198 aa)). 372 to 379 (GPPGTGKT) contributes to the ATP binding site. Residues 608–789 (ISKPGIAMGL…REVLNIALSR (182 aa)) enclose the Lon proteolytic domain. Residues Ser695 and Lys738 contribute to the active site.

The protein belongs to the peptidase S16 family. In terms of assembly, homohexamer. Organized in a ring with a central cavity.

The protein localises to the cytoplasm. The enzyme catalyses Hydrolysis of proteins in presence of ATP.. ATP-dependent serine protease that mediates the selective degradation of mutant and abnormal proteins as well as certain short-lived regulatory proteins. Required for cellular homeostasis and for survival from DNA damage and developmental changes induced by stress. Degrades polypeptides processively to yield small peptide fragments that are 5 to 10 amino acids long. Binds to DNA in a double-stranded, site-specific manner. This Syntrophus aciditrophicus (strain SB) protein is Lon protease.